A 391-amino-acid chain; its full sequence is Response regulator aspartate phosphatase I (391 aa).

TPR repeat units follow at residues 62 to 95 (LEFR…EKQG), 150 to 183 (SYVY…AVQT), 184 to 217 (VRCQ…SKES), 224 to 257 (AMSH…FEKS), 275 to 311 (KQQN…LEGL), and 338 to 371 (ENFS…RRKI).

It belongs to the Rap family.

The protein resides in the cytoplasm. Its activity is regulated as follows. Inhibited by PhrI. Activates ICEBs1 gene expression, excision and transfer by inactivating the ICEBs1 repressor protein ImmR. RapI-mediated induction likely results from an increase in the specific activity of the protease ImmA, which mediates proteolysis of ImmR. In addition, is involved in regulation of sporulation. Acts as a phosphatase that specifically dephosphorylates the sporulation initiation phosphotransferase Spo0F and inhibits its activity. In Bacillus subtilis (strain 168), this protein is Response regulator aspartate phosphatase I (rapI).